A 338-amino-acid polypeptide reads, in one-letter code: Tryptophan--tRNA ligase (338 aa).

ATP-binding positions include 11-13 (QPS) and 19-20 (GN). The 'HIGH' region signature appears at 12 to 20 (PSGELSIGN). D135 contributes to the L-tryptophan binding site. ATP-binding positions include 147–149 (GSD), V189, and 198–202 (KMSKS). Residues 198 to 202 (KMSKS) carry the 'KMSKS' region motif.

It belongs to the class-I aminoacyl-tRNA synthetase family. As to quaternary structure, homodimer.

It is found in the cytoplasm. The catalysed reaction is tRNA(Trp) + L-tryptophan + ATP = L-tryptophyl-tRNA(Trp) + AMP + diphosphate + H(+). Its function is as follows. Catalyzes the attachment of tryptophan to tRNA(Trp). The polypeptide is Tryptophan--tRNA ligase (Vibrio parahaemolyticus serotype O3:K6 (strain RIMD 2210633)).